Here is a 2196-residue protein sequence, read N- to C-terminus: Cell polarity protein mor2 (2196 aa).

It to yeast TAO3/PAG1.

The protein localises to the cytoplasm. The protein resides in the membrane. Functionally, required for the maintenance of cell polarity. Has a role in localizing F-actin at the cell tips. This chain is Cell polarity protein mor2 (mor2), found in Schizosaccharomyces pombe (strain 972 / ATCC 24843) (Fission yeast).